A 253-amino-acid chain; its full sequence is Phosphoadenosine 5'-phosphosulfate reductase (253 aa).

Cys242 functions as the Nucleophile; cysteine thiosulfonate intermediate in the catalytic mechanism.

The protein belongs to the PAPS reductase family. CysH subfamily.

It is found in the cytoplasm. It catalyses the reaction [thioredoxin]-disulfide + sulfite + adenosine 3',5'-bisphosphate + 2 H(+) = [thioredoxin]-dithiol + 3'-phosphoadenylyl sulfate. Its pathway is sulfur metabolism; hydrogen sulfide biosynthesis; sulfite from sulfate: step 3/3. Its function is as follows. Catalyzes the formation of sulfite from phosphoadenosine 5'-phosphosulfate (PAPS) using thioredoxin as an electron donor. The polypeptide is Phosphoadenosine 5'-phosphosulfate reductase (Vibrio cholerae serotype O1 (strain ATCC 39541 / Classical Ogawa 395 / O395)).